Reading from the N-terminus, the 177-residue chain is MCGVVVVIVALVPADPLLPAFACGCSCDAPVFIPFFNISSSIILICSTCVFLNRSYFSSRSFSISCISKPCRLSCPSFSVVLYSGNKFLTMVRISLMPSFLFPFATLLCLLKFVSSLISKLFCISLVNLTSDIRRLFPIMLIPPPFLTSSSFLLEIKVCISCNTTNSLTSLSIYAFL.

A signal peptide spans 1–22 (MCGVVVVIVALVPADPLLPAFA). Transmembrane regions (helical) follow at residues 31 to 51 (VFIP…TCVF), 94 to 114 (ISLM…LKFV), and 136 to 156 (LFPI…LLEI).

The protein localises to the membrane. This is an uncharacterized protein from Saccharomyces cerevisiae (strain ATCC 204508 / S288c) (Baker's yeast).